The chain runs to 321 residues: tRNA U34 carboxymethyltransferase (321 aa).

Residues Lys90, Trp104, Lys109, Gly129, 151–153 (DPT), 180–181 (IE), Met195, Tyr199, and Arg314 contribute to the carboxy-S-adenosyl-L-methionine site.

The protein belongs to the class I-like SAM-binding methyltransferase superfamily. CmoB family. As to quaternary structure, homotetramer.

The enzyme catalyses carboxy-S-adenosyl-L-methionine + 5-hydroxyuridine(34) in tRNA = 5-carboxymethoxyuridine(34) in tRNA + S-adenosyl-L-homocysteine + H(+). Catalyzes carboxymethyl transfer from carboxy-S-adenosyl-L-methionine (Cx-SAM) to 5-hydroxyuridine (ho5U) to form 5-carboxymethoxyuridine (cmo5U) at position 34 in tRNAs. This chain is tRNA U34 carboxymethyltransferase, found in Haemophilus influenzae (strain PittGG).